A 147-amino-acid chain; its full sequence is Hemoglobin subunit gamma (147 aa).

Residues 3-147 form the Globin domain; the sequence is HFTAEEKAAI…VANALAYKYH (145 aa). Heme b-binding residues include histidine 64 and histidine 93.

Belongs to the globin family. As to quaternary structure, heterotetramer of two alpha chains and two gamma chains in fetal hemoglobin (Hb F). As to expression, red blood cells.

Gamma chains make up the fetal hemoglobin F, in combination with alpha chains. The polypeptide is Hemoglobin subunit gamma (HBG) (Loxodonta africana (African elephant)).